The chain runs to 261 residues: Precorrin-6A reductase (261 aa).

The protein belongs to the precorrin-6x reductase family.

The catalysed reaction is precorrin-6B + NADP(+) = precorrin-6A + NADPH + 2 H(+). Its pathway is cofactor biosynthesis; adenosylcobalamin biosynthesis; cob(II)yrinate a,c-diamide from precorrin-2 (aerobic route): step 6/10. Its function is as follows. Catalyzes the reduction of the macrocycle of precorrin-6X into precorrin-6Y. The chain is Precorrin-6A reductase (cobK) from Sinorhizobium sp.